A 460-amino-acid chain; its full sequence is MGNTESGSHQKGLSRILPEEKAEIEQFFENMCRMQSGPKKSVGLQYFQDALRNSLPCSISQRIFDGIQSVRTNSKSSTMSAEISKEQFLVFYVDLLRGTAEEKSQVICDMISCNNSEHMKGHQVQKFLEDIIAAVIYVLKQQSLLKGWNLENMRDCTLGTQGLAMQLLSQLQSIDGQKFERQELLDSPCSKSCIEDWLYKIPMISLFVRVMLTVGLSILKHHTEHQKDMKTLLPKCTGMKNTSFVSLLDLPAVMHLNYYLPYEVQHKWRLLFSSQIHGESFSQLCGHILDQGPCLLIVKDSDGFVFGGFASQSWKVKPQFQGDSRCFLFSISPRLDVYTYTGYNDHYMYLNRAQQSLPNGLGMGGQHEYFGFWIDSNFGIGHSKAKPSCTTYNSPQLSAKEEFSIHTVEVWAVGDVPEHLLAKNPRSILDSDTEARALLEMAGQTRQSDGLREVTEEDES.

Positions 246–414 constitute a TLDc domain; it reads SLLDLPAVMH…IHTVEVWAVG (169 aa).

The protein localises to the membrane. It is found in the cytoplasm. It localises to the lysosome. Activates an alternative mTOR signaling to regulate cell proliferation and migration. This is MTOR-associated protein MEAK7 (meak7) from Xenopus laevis (African clawed frog).